The chain runs to 180 residues: Large ribosomal subunit protein uL5 (180 aa).

It belongs to the universal ribosomal protein uL5 family. Forms a bridge to the 30S subunit in the 70S ribosome. Part of the 50S ribosomal subunit; part of the 5S rRNA/L5/L18/L25 (CTC) subcomplex. Is known to contact the 5S rRNA, 23S rRNA and the P site tRNA.

This is one of the proteins that bind and probably mediate the attachment of the 5S RNA into the large ribosomal subunit, where it forms part of the central protuberance. In the 70S ribosome it contacts protein S13 of the 30S subunit (bridge B1b), connecting the 2 subunits; this bridge is implicated in subunit movement. Contacts the P site tRNA; the 5S rRNA and some of its associated proteins might help stabilize positioning of ribosome-bound tRNAs. This is Large ribosomal subunit protein uL5 (rplE) from Deinococcus radiodurans (strain ATCC 13939 / DSM 20539 / JCM 16871 / CCUG 27074 / LMG 4051 / NBRC 15346 / NCIMB 9279 / VKM B-1422 / R1).